The sequence spans 1259 residues: Trafficking protein particle complex II-specific subunit 130 homolog (1259 aa).

A2 carries the N-acetylalanine modification. A disordered region spans residues 479-526; sequence GNIPEMFDGRPSFTEGSGLEASPRTPSSLKVQAPPMSRTNSSPGNFES.

This sequence belongs to the TMEM1 family. In terms of assembly, part of the multisubunit TRAPP (transport protein particle) II complex composed of BET3, BET5, TRS20, TRS23, TRS31, TRS33, TRS65, TRS85, TRS120 and TRS130.

Its subcellular location is the golgi apparatus. The protein resides in the trans-Golgi network. It is found in the early endosome. Its function is as follows. Specific subunit of the TRAPP II complex, a highly conserved vesicle tethering complex that is required for the proper transport of proteins in post-Golgi trafficking pathways to the growing cell plate in mitotic active cells. Required for the polarized and selective transport of PIN2, but not PIN1, to the plasma membrane. Not required for ER-to-Golgi as well as biosynthetic and endocytic vacuolar transport. The chain is Trafficking protein particle complex II-specific subunit 130 homolog from Arabidopsis thaliana (Mouse-ear cress).